We begin with the raw amino-acid sequence, 767 residues long: Ribonucleoside-diphosphate reductase large subunit (767 aa).

Substrate contacts are provided by residues T176, 191–192, G222, 392–396, and 578–582; these read SC, NLCAE, and PTAGT. C192 and C408 are oxidised to a cystine. Residue N392 is the Proton acceptor of the active site. The Cysteine radical intermediate role is filled by C394. The Proton acceptor role is filled by E396.

The protein belongs to the ribonucleoside diphosphate reductase large chain family. In terms of assembly, heterotetramer composed of a homodimer of the large subunit (R1) and a homodimer of the small subunit (R2). Larger multisubunit protein complex are also active, composed of (R1)n(R2)n.

The catalysed reaction is a 2'-deoxyribonucleoside 5'-diphosphate + [thioredoxin]-disulfide + H2O = a ribonucleoside 5'-diphosphate + [thioredoxin]-dithiol. Ribonucleoside-diphosphate reductase holoenzyme provides the precursors necessary for viral DNA synthesis. Allows virus growth in non-dividing cells, as well as reactivation from latency in infected hosts. Catalyzes the biosynthesis of deoxyribonucleotides from the corresponding ribonucleotides. The polypeptide is Ribonucleoside-diphosphate reductase large subunit (Saimiri sciureus (Common squirrel monkey)).